The following is a 210-amino-acid chain: Putative tyrosine-protein phosphatase OCA1 (210 aa).

The Tyrosine-protein phosphatase domain occupies 44–204; the sequence is NFCPVERYLY…EIDREKAPNW (161 aa). Residue cysteine 140 is the Phosphocysteine intermediate of the active site.

Belongs to the protein-tyrosine phosphatase family.

The protein localises to the cytoplasm. It catalyses the reaction O-phospho-L-tyrosyl-[protein] + H2O = L-tyrosyl-[protein] + phosphate. Its function is as follows. Putative tyrosine-protein phosphatase required for protection against superoxide stress. The polypeptide is Putative tyrosine-protein phosphatase OCA1 (OCA1) (Kluyveromyces lactis (strain ATCC 8585 / CBS 2359 / DSM 70799 / NBRC 1267 / NRRL Y-1140 / WM37) (Yeast)).